The following is a 150-amino-acid chain: D-aminoacyl-tRNA deacylase (150 aa).

The Gly-cisPro motif, important for rejection of L-amino acids motif lies at 136-137 (GP).

The protein belongs to the DTD family. In terms of assembly, homodimer.

The protein resides in the cytoplasm. The catalysed reaction is glycyl-tRNA(Ala) + H2O = tRNA(Ala) + glycine + H(+). The enzyme catalyses a D-aminoacyl-tRNA + H2O = a tRNA + a D-alpha-amino acid + H(+). An aminoacyl-tRNA editing enzyme that deacylates mischarged D-aminoacyl-tRNAs. Also deacylates mischarged glycyl-tRNA(Ala), protecting cells against glycine mischarging by AlaRS. Acts via tRNA-based rather than protein-based catalysis; rejects L-amino acids rather than detecting D-amino acids in the active site. By recycling D-aminoacyl-tRNA to D-amino acids and free tRNA molecules, this enzyme counteracts the toxicity associated with the formation of D-aminoacyl-tRNA entities in vivo and helps enforce protein L-homochirality. The polypeptide is D-aminoacyl-tRNA deacylase (Staphylococcus saprophyticus subsp. saprophyticus (strain ATCC 15305 / DSM 20229 / NCIMB 8711 / NCTC 7292 / S-41)).